Reading from the N-terminus, the 64-residue chain is DNA-binding protein 7b (64 aa).

This sequence belongs to the 7 kDa DNA-binding/endoribonuclease P2 family. Monomer.

It localises to the cytoplasm. In terms of biological role, can constrain negative DNA supercoils. May be involved in maintaining the integrity of the genome at high temperature. This is DNA-binding protein 7b from Saccharolobus islandicus (strain HVE10/4) (Sulfolobus islandicus).